Reading from the N-terminus, the 152-residue chain is Ubiquitin-conjugating enzyme E2 2 (152 aa).

A UBC core domain is found at proline 4–threonine 150. Cysteine 88 functions as the Glycyl thioester intermediate in the catalytic mechanism.

This sequence belongs to the ubiquitin-conjugating enzyme family.

The enzyme catalyses S-ubiquitinyl-[E1 ubiquitin-activating enzyme]-L-cysteine + [E2 ubiquitin-conjugating enzyme]-L-cysteine = [E1 ubiquitin-activating enzyme]-L-cysteine + S-ubiquitinyl-[E2 ubiquitin-conjugating enzyme]-L-cysteine.. The protein operates within protein modification; protein ubiquitination. Its function is as follows. Catalyzes the covalent attachment of ubiquitin to other proteins. The sequence is that of Ubiquitin-conjugating enzyme E2 2 (UBC2) from Triticum aestivum (Wheat).